We begin with the raw amino-acid sequence, 731 residues long: DNA ligase (731 aa).

NAD(+) is bound by residues 47 to 51, 96 to 97, and glutamate 133; these read DAEYD and SI. Residue lysine 135 is the N6-AMP-lysine intermediate of the active site. Positions 156, 192, 313, and 337 each coordinate NAD(+). Cysteine 462, cysteine 465, cysteine 480, and cysteine 486 together coordinate Zn(2+). In terms of domain architecture, BRCT spans 645–731; that stretch reads AATLPLAGMT…RGTPPNAGGA (87 aa).

The protein belongs to the NAD-dependent DNA ligase family. LigA subfamily. The cofactor is Mg(2+). Requires Mn(2+) as cofactor.

It carries out the reaction NAD(+) + (deoxyribonucleotide)n-3'-hydroxyl + 5'-phospho-(deoxyribonucleotide)m = (deoxyribonucleotide)n+m + AMP + beta-nicotinamide D-nucleotide.. In terms of biological role, DNA ligase that catalyzes the formation of phosphodiester linkages between 5'-phosphoryl and 3'-hydroxyl groups in double-stranded DNA using NAD as a coenzyme and as the energy source for the reaction. It is essential for DNA replication and repair of damaged DNA. The chain is DNA ligase from Acidovorax sp. (strain JS42).